We begin with the raw amino-acid sequence, 98 residues long: UPF0235 protein CCNA_03737 (98 aa).

It belongs to the UPF0235 family.

The sequence is that of UPF0235 protein CCNA_03737 from Caulobacter vibrioides (strain NA1000 / CB15N) (Caulobacter crescentus).